The following is a 291-amino-acid chain: ATP synthase gamma chain (291 aa).

Belongs to the ATPase gamma chain family. As to quaternary structure, F-type ATPases have 2 components, CF(1) - the catalytic core - and CF(0) - the membrane proton channel. CF(1) has five subunits: alpha(3), beta(3), gamma(1), delta(1), epsilon(1). CF(0) has three main subunits: a, b and c.

It is found in the cell inner membrane. Its function is as follows. Produces ATP from ADP in the presence of a proton gradient across the membrane. The gamma chain is believed to be important in regulating ATPase activity and the flow of protons through the CF(0) complex. The protein is ATP synthase gamma chain of Sphingopyxis alaskensis (strain DSM 13593 / LMG 18877 / RB2256) (Sphingomonas alaskensis).